The chain runs to 295 residues: Pyridoxal 5'-phosphate synthase subunit PdxS (295 aa).

D25 is a D-ribose 5-phosphate binding site. The active-site Schiff-base intermediate with D-ribose 5-phosphate is K82. G154 is a D-ribose 5-phosphate binding site. R166 provides a ligand contact to D-glyceraldehyde 3-phosphate. Residues G215 and G236–S237 each bind D-ribose 5-phosphate.

Belongs to the PdxS/SNZ family. In the presence of PdxT, forms a dodecamer of heterodimers.

It catalyses the reaction aldehydo-D-ribose 5-phosphate + D-glyceraldehyde 3-phosphate + L-glutamine = pyridoxal 5'-phosphate + L-glutamate + phosphate + 3 H2O + H(+). The protein operates within cofactor biosynthesis; pyridoxal 5'-phosphate biosynthesis. In terms of biological role, catalyzes the formation of pyridoxal 5'-phosphate from ribose 5-phosphate (RBP), glyceraldehyde 3-phosphate (G3P) and ammonia. The ammonia is provided by the PdxT subunit. Can also use ribulose 5-phosphate and dihydroxyacetone phosphate as substrates, resulting from enzyme-catalyzed isomerization of RBP and G3P, respectively. The chain is Pyridoxal 5'-phosphate synthase subunit PdxS from Shouchella clausii (strain KSM-K16) (Alkalihalobacillus clausii).